A 353-amino-acid chain; its full sequence is Phosphate acyltransferase (353 aa).

It belongs to the PlsX family. In terms of assembly, homodimer. Probably interacts with PlsY.

The protein resides in the cytoplasm. The enzyme catalyses a fatty acyl-[ACP] + phosphate = an acyl phosphate + holo-[ACP]. It functions in the pathway lipid metabolism; phospholipid metabolism. Catalyzes the reversible formation of acyl-phosphate (acyl-PO(4)) from acyl-[acyl-carrier-protein] (acyl-ACP). This enzyme utilizes acyl-ACP as fatty acyl donor, but not acyl-CoA. The sequence is that of Phosphate acyltransferase from Rhodopseudomonas palustris (strain BisB18).